The sequence spans 219 residues: Mediator of RNA polymerase II transcription subunit 18 (219 aa).

This sequence belongs to the Mediator complex subunit 18 family. In terms of assembly, component of the Mediator complex. Interacts with YY1 to suppress disease susceptibility via the repression of genes glutaredoxins GRX480, GRXS13 and thioredoxin TRX-h5. Binds to ABI4 to regulate abscisic acid responses; recruited by ABI4 to ABI5 promoter in the presence of abscisic acid (ABA). Interacts with SUF4 to regulate flowering time; recruited by SUF4 to FLC promoter.

It is found in the nucleus. In terms of biological role, component of the Mediator complex, a coactivator involved in the regulated transcription of nearly all RNA polymerase II-dependent genes. Mediator functions as a bridge to convey information from gene-specific regulatory proteins to the basal RNA polymerase II transcription machinery. The Mediator complex, having a compact conformation in its free form, is recruited to promoters by direct interactions with regulatory proteins and serves for the assembly of a functional pre-initiation complex with RNA polymerase II and the general transcription factors. Involved in the regulation of histone H3 lysine tri-methylation (H3K36me3). Associates with the promoter, coding and terminator regions of target genes suggesting its function in transcription initiation, elongation and termination. Multifunctional protein which regulates plant immunity, especially during necrotrophic fungal infection (e.g. B.cinerea and A.brassicicola), flowering time and responses to hormones (e.g. abscisic acid ABA and ethylene) through interactions with distinct transcription factors. This is Mediator of RNA polymerase II transcription subunit 18 from Arabidopsis thaliana (Mouse-ear cress).